The sequence spans 441 residues: Velvet complex subunit B (441 aa).

Positions 1-173 (MSTLGQGDFE…SDQGVRLRLR (173 aa)) constitute a Velvet domain. 3 disordered regions span residues 200–220 (GYLPHDANHDLSPNGHSPHHL), 234–295 (RSRS…ETDT), and 341–396 (MPSP…PSYA). Low complexity-rich tracts occupy residues 272–283 (DGASPDSPHPSS) and 361–375 (PAGAPGSASSAFSPG).

It belongs to the velvet family. VelB subfamily. Component of the heterotrimeric velvet complex composed of laeA, veA and velB; VeA acting as a bridging protein between laeA and velB.

Its subcellular location is the nucleus. It is found in the cytoplasm. Its function is as follows. Component of the velvet transcription factor complex that controls sexual/asexual developmental ratio in response to light, promoting sexual development in the darkness while stimulating asexual sporulation under illumination. The velvet complex acts as a global regulator for secondary metabolite gene expression and is required for the production of chaetoglobosin A. The chain is Velvet complex subunit B from Chaetomium globosum (strain ATCC 6205 / CBS 148.51 / DSM 1962 / NBRC 6347 / NRRL 1970) (Soil fungus).